A 127-amino-acid polypeptide reads, in one-letter code: Fluoride-specific ion channel FluC (127 aa).

4 helical membrane passes run 4-24, 35-55, 71-91, and 103-123; these read LLLA…LLSM, LGTL…FAWF, TGFC…VFLL, and VFVN…LFSA. The Na(+) site is built by Gly-75 and Thr-78.

Belongs to the fluoride channel Fluc/FEX (TC 1.A.43) family.

The protein resides in the cell inner membrane. It catalyses the reaction fluoride(in) = fluoride(out). With respect to regulation, na(+) is not transported, but it plays an essential structural role and its presence is essential for fluoride channel function. Fluoride-specific ion channel. Important for reducing fluoride concentration in the cell, thus reducing its toxicity. This is Fluoride-specific ion channel FluC from Escherichia coli (strain ATCC 8739 / DSM 1576 / NBRC 3972 / NCIMB 8545 / WDCM 00012 / Crooks).